An 84-amino-acid polypeptide reads, in one-letter code: Small ribosomal subunit protein uS17 (84 aa).

It belongs to the universal ribosomal protein uS17 family. Part of the 30S ribosomal subunit.

One of the primary rRNA binding proteins, it binds specifically to the 5'-end of 16S ribosomal RNA. In Glaesserella parasuis serovar 5 (strain SH0165) (Haemophilus parasuis), this protein is Small ribosomal subunit protein uS17.